A 334-amino-acid chain; its full sequence is Holliday junction branch migration complex subunit RuvB (334 aa).

The segment at 4–184 (ADRLIQPQIQ…FGIPLRLEFY (181 aa)) is large ATPase domain (RuvB-L). Residues arginine 24, glycine 65, lysine 68, threonine 69, threonine 70, 131 to 133 (EDY), arginine 174, tyrosine 184, and arginine 221 contribute to the ATP site. Residue threonine 69 participates in Mg(2+) binding. Positions 185–255 (NIKDLSTIVT…VAEHALDLLD (71 aa)) are small ATPAse domain (RuvB-S). The segment at 258 to 334 (SEGFDYMDRK…YQHFELIKPE (77 aa)) is head domain (RuvB-H). DNA-binding residues include arginine 294, arginine 313, and arginine 318.

It belongs to the RuvB family. Homohexamer. Forms an RuvA(8)-RuvB(12)-Holliday junction (HJ) complex. HJ DNA is sandwiched between 2 RuvA tetramers; dsDNA enters through RuvA and exits via RuvB. An RuvB hexamer assembles on each DNA strand where it exits the tetramer. Each RuvB hexamer is contacted by two RuvA subunits (via domain III) on 2 adjacent RuvB subunits; this complex drives branch migration. In the full resolvosome a probable DNA-RuvA(4)-RuvB(12)-RuvC(2) complex forms which resolves the HJ.

The protein resides in the cytoplasm. It carries out the reaction ATP + H2O = ADP + phosphate + H(+). Functionally, the RuvA-RuvB-RuvC complex processes Holliday junction (HJ) DNA during genetic recombination and DNA repair, while the RuvA-RuvB complex plays an important role in the rescue of blocked DNA replication forks via replication fork reversal (RFR). RuvA specifically binds to HJ cruciform DNA, conferring on it an open structure. The RuvB hexamer acts as an ATP-dependent pump, pulling dsDNA into and through the RuvAB complex. RuvB forms 2 homohexamers on either side of HJ DNA bound by 1 or 2 RuvA tetramers; 4 subunits per hexamer contact DNA at a time. Coordinated motions by a converter formed by DNA-disengaged RuvB subunits stimulates ATP hydrolysis and nucleotide exchange. Immobilization of the converter enables RuvB to convert the ATP-contained energy into a lever motion, pulling 2 nucleotides of DNA out of the RuvA tetramer per ATP hydrolyzed, thus driving DNA branch migration. The RuvB motors rotate together with the DNA substrate, which together with the progressing nucleotide cycle form the mechanistic basis for DNA recombination by continuous HJ branch migration. Branch migration allows RuvC to scan DNA until it finds its consensus sequence, where it cleaves and resolves cruciform DNA. The sequence is that of Holliday junction branch migration complex subunit RuvB from Shewanella baltica (strain OS155 / ATCC BAA-1091).